The following is a 173-amino-acid chain: NAD(P)H-quinone oxidoreductase subunit J (173 aa).

Belongs to the complex I 30 kDa subunit family. As to quaternary structure, NDH-1 can be composed of about 15 different subunits; different subcomplexes with different compositions have been identified which probably have different functions.

The protein localises to the cellular thylakoid membrane. It carries out the reaction a plastoquinone + NADH + (n+1) H(+)(in) = a plastoquinol + NAD(+) + n H(+)(out). The catalysed reaction is a plastoquinone + NADPH + (n+1) H(+)(in) = a plastoquinol + NADP(+) + n H(+)(out). In terms of biological role, NDH-1 shuttles electrons from an unknown electron donor, via FMN and iron-sulfur (Fe-S) centers, to quinones in the respiratory and/or the photosynthetic chain. The immediate electron acceptor for the enzyme in this species is believed to be plastoquinone. Couples the redox reaction to proton translocation, and thus conserves the redox energy in a proton gradient. Cyanobacterial NDH-1 also plays a role in inorganic carbon-concentration. The sequence is that of NAD(P)H-quinone oxidoreductase subunit J from Prochlorococcus marinus (strain NATL1A).